The chain runs to 360 residues: UDP-N-acetylglucosamine--N-acetylmuramyl-(pentapeptide) pyrophosphoryl-undecaprenol N-acetylglucosamine transferase (360 aa).

Residues Ser198 and Gln289 each coordinate UDP-N-acetyl-alpha-D-glucosamine.

The protein belongs to the glycosyltransferase 28 family. MurG subfamily.

The protein localises to the cell membrane. It carries out the reaction Mur2Ac(oyl-L-Ala-gamma-D-Glu-L-Lys-D-Ala-D-Ala)-di-trans,octa-cis-undecaprenyl diphosphate + UDP-N-acetyl-alpha-D-glucosamine = beta-D-GlcNAc-(1-&gt;4)-Mur2Ac(oyl-L-Ala-gamma-D-Glu-L-Lys-D-Ala-D-Ala)-di-trans,octa-cis-undecaprenyl diphosphate + UDP + H(+). It participates in cell wall biogenesis; peptidoglycan biosynthesis. Cell wall formation. Catalyzes the transfer of a GlcNAc subunit on undecaprenyl-pyrophosphoryl-MurNAc-pentapeptide (lipid intermediate I) to form undecaprenyl-pyrophosphoryl-MurNAc-(pentapeptide)GlcNAc (lipid intermediate II). The protein is UDP-N-acetylglucosamine--N-acetylmuramyl-(pentapeptide) pyrophosphoryl-undecaprenol N-acetylglucosamine transferase of Streptococcus pyogenes serotype M49 (strain NZ131).